A 128-amino-acid chain; its full sequence is Small ribosomal subunit protein uS11 (128 aa).

This sequence belongs to the universal ribosomal protein uS11 family. Part of the 30S ribosomal subunit. Interacts with proteins S7 and S18. Binds to IF-3.

Its function is as follows. Located on the platform of the 30S subunit, it bridges several disparate RNA helices of the 16S rRNA. Forms part of the Shine-Dalgarno cleft in the 70S ribosome. This Wolbachia sp. subsp. Drosophila simulans (strain wRi) protein is Small ribosomal subunit protein uS11.